Reading from the N-terminus, the 653-residue chain is Asparagine--tRNA ligase, cytoplasmic (653 aa).

The protein belongs to the class-II aminoacyl-tRNA synthetase family.

Its subcellular location is the cytoplasm. The enzyme catalyses tRNA(Asn) + L-asparagine + ATP = L-asparaginyl-tRNA(Asn) + AMP + diphosphate + H(+). The protein is Asparagine--tRNA ligase, cytoplasmic (asnS1) of Dictyostelium discoideum (Social amoeba).